We begin with the raw amino-acid sequence, 605 residues long: Protein kinase wis1 (605 aa).

Residues 1 to 20 (MSSPNNQPLSCSLRQLSISP) are compositionally biased toward polar residues. The interval 1–141 (MSSPNNQPLS…TPPGPFPGGL (141 aa)) is disordered. 2 stretches are compositionally biased toward low complexity: residues 31–73 (GSLL…SSPS) and 90–105 (RLGR…SLNL). A compositionally biased stretch (basic and acidic residues) spans 106-115 (DMKDPSEKPR). A Phosphoserine modification is found at S168. The span at 188-200 (SQLAGRLSNSPVK) shows a compositional bias: polar residues. Residues 188–263 (SQLAGRLSNS…PSSMASRRGL (76 aa)) are disordered. Residues 244-256 (SNSNPTSPVSPSS) show a composition bias toward low complexity. At S253 the chain carries Phosphoserine. One can recognise a Protein kinase domain in the interval 320–579 (IIKLEELGKG…YHELANHPWL (260 aa)). Residues 326 to 334 (LGKGNYGVV) and K349 each bind ATP. D441 serves as the catalytic Proton acceptor. Residue S469 is modified to Phosphoserine. Residue T473 is modified to Phosphothreonine.

Belongs to the protein kinase superfamily. STE Ser/Thr protein kinase family. MAP kinase kinase subfamily. In terms of processing, dephosphorylated by pyp1 and pyp2.

It catalyses the reaction L-seryl-[protein] + ATP = O-phospho-L-seryl-[protein] + ADP + H(+). The enzyme catalyses L-threonyl-[protein] + ATP = O-phospho-L-threonyl-[protein] + ADP + H(+). The catalysed reaction is L-tyrosyl-[protein] + ATP = O-phospho-L-tyrosyl-[protein] + ADP + H(+). In terms of biological role, dosage-dependent regulator of mitosis with serine/ threonine protein kinase activity. May play a role in the integration of nutritional sensing with the control over entry into mitosis. It may interact with cdc25, wee1 and win1. May activate sty1. The protein is Protein kinase wis1 (wis1) of Schizosaccharomyces pombe (strain 972 / ATCC 24843) (Fission yeast).